A 240-amino-acid polypeptide reads, in one-letter code: Late expression factor 5 homolog (240 aa).

The protein belongs to the baculoviridae LEF-5 family.

Required for late and very late gene expression. This Tortricidae (ClGV) protein is Late expression factor 5 homolog.